A 596-amino-acid chain; its full sequence is Beta-fructofuranosidase, insoluble isoenzyme 7 (596 aa).

Positions 1 to 24 (MARLGLAVCAASFHLFLLLASTSS) are cleaved as a signal peptide. Residues 51–54 (WQND), Gln70, and Trp78 each bind substrate. Asp54 is a catalytic residue. Asn82 is a glycosylation site (N-linked (GlcNAc...) asparagine). Residues 115 to 116 (WS), 179 to 180 (RD), and Glu234 each bind substrate. Asn330 is a glycosylation site (N-linked (GlcNAc...) asparagine). A disulfide bond links Cys432 and Cys478. Residue Asn552 is glycosylated (N-linked (GlcNAc...) asparagine).

It belongs to the glycosyl hydrolase 32 family.

It localises to the secreted. It is found in the extracellular space. Its subcellular location is the apoplast. The protein resides in the cell wall. The catalysed reaction is Hydrolysis of terminal non-reducing beta-D-fructofuranoside residues in beta-D-fructofuranosides.. Its function is as follows. May play a role in sucrose partitioning during seed development. The chain is Beta-fructofuranosidase, insoluble isoenzyme 7 (CIN7) from Oryza sativa subsp. indica (Rice).